Consider the following 526-residue polypeptide: Butyrophilin subfamily 1 member A1 (526 aa).

Positions 1-26 (MAVFPNSCLAGCLLIFILLQLPKLDS) are cleaved as a signal peptide. Ig-like V-type domains are found at residues 27–140 (APFD…VHLK) and 148–234 (PHIS…VEVS). The Extracellular portion of the chain corresponds to 27–242 (APFDVIGPQE…VSIPASFFPR (216 aa)). Intrachain disulfides connect C50-C124 and C164-C218. Residue N55 is glycosylated (N-linked (GlcNAc...) (complex) asparagine). N215 carries an N-linked (GlcNAc...) (hybrid) asparagine glycan. A helical transmembrane segment spans residues 243 to 269 (LTPWMVAVAVILVVLGLLTIGSIFFTW). Residues 270–526 (RLYKERSRQR…IPLQPSQGVP (257 aa)) are Cytoplasmic-facing. In terms of domain architecture, B30.2/SPRY spans 285-479 (SKEKLLEELK…LTICPVTDGL (195 aa)).

It belongs to the immunoglobulin superfamily. BTN/MOG family. In terms of assembly, seems to associate with xanthine dehydrogenase/oxidase. As to expression, expressed in mammary tissue.

The protein localises to the membrane. Its function is as follows. May function in the secretion of milk-fat droplets. May act as a specific membrane-associated receptor for the association of cytoplasmic droplets with the apical plasma membrane. Inhibits the proliferation of CD4 and CD8 T-cells activated by anti-CD3 antibodies, T-cell metabolism and IL2 and IFNG secretion. This chain is Butyrophilin subfamily 1 member A1 (BTN1A1), found in Bos taurus (Bovine).